The chain runs to 426 residues: Histidine--tRNA ligase (426 aa).

The protein belongs to the class-II aminoacyl-tRNA synthetase family. As to quaternary structure, homodimer.

It localises to the cytoplasm. The enzyme catalyses tRNA(His) + L-histidine + ATP = L-histidyl-tRNA(His) + AMP + diphosphate + H(+). This is Histidine--tRNA ligase from Streptococcus agalactiae serotype III (strain NEM316).